The following is a 134-amino-acid chain: Replication enhancer protein (134 aa).

This sequence belongs to the geminiviridae replication enhancer protein family. Homooligomer. Interacts with the replication-associated protein (REP). Interacts with host proliferating cell nuclear antigen (PCNA). Interacts with host retinoblastoma-related protein 1 (RBR1), and may thereby deregulate the host cell cycle. Oligomerization and interaction with PCNA are necessary for optimal replication enhancement.

Increases viral DNA accumulation. Enhances infectivity and symptom expression. In Cynanchum acutum (Little mallow), this protein is Replication enhancer protein.